Reading from the N-terminus, the 732-residue chain is Polyphosphate kinase (732 aa).

Residue asparagine 61 participates in ATP binding. Residues arginine 417 and arginine 447 each coordinate Mg(2+). The active-site Phosphohistidine intermediate is histidine 477. ATP is bound by residues tyrosine 510, arginine 606, and histidine 634. The interval 699-718 (DGTYRQRQPAPGEAERGTHS) is disordered.

It belongs to the polyphosphate kinase 1 (PPK1) family. Mg(2+) serves as cofactor. In terms of processing, an intermediate of this reaction is the autophosphorylated ppk in which a phosphate is covalently linked to a histidine residue through a N-P bond.

It catalyses the reaction [phosphate](n) + ATP = [phosphate](n+1) + ADP. Its function is as follows. Catalyzes the reversible transfer of the terminal phosphate of ATP to form a long-chain polyphosphate (polyP). The sequence is that of Polyphosphate kinase from Thermosynechococcus vestitus (strain NIES-2133 / IAM M-273 / BP-1).